Reading from the N-terminus, the 169-residue chain is Ion-translocating oxidoreductase complex subunit B (169 aa).

Residues 1–23 form a hydrophobic region; the sequence is MIISIIIFSILSFILGVIVSLVS. The region spanning 30–89 is the 4Fe-4S domain; the sequence is SNLSLINDIDELLPQMQCAQCGYPGCYAYSQAIVDGNENIYKCIPGGKEVVLKLENLLNK. [4Fe-4S] cluster-binding residues include Cys-47, Cys-50, Cys-55, Cys-72, Cys-116, Cys-119, Cys-122, Cys-126, Cys-146, Cys-149, Cys-152, and Cys-156. 4Fe-4S ferredoxin-type domains are found at residues 107–136 and 137–166; these read SIVEIDENNCVGCSKCRLVCPVDAVVGTYN and FRHTVLIDSCTGCNLCIPLCPTNCIKKKIM.

Belongs to the 4Fe4S bacterial-type ferredoxin family. RnfB subfamily. In terms of assembly, the complex is composed of six subunits: RnfA, RnfB, RnfC, RnfD, RnfE and RnfG. [4Fe-4S] cluster is required as a cofactor.

It localises to the cell inner membrane. In terms of biological role, part of a membrane-bound complex that couples electron transfer with translocation of ions across the membrane. The chain is Ion-translocating oxidoreductase complex subunit B from Buchnera aphidicola subsp. Baizongia pistaciae (strain Bp).